The chain runs to 302 residues: Sulfate adenylyltransferase subunit 2 (302 aa).

Residues 280–302 (RQGRVIDHDQAGSMEQKKREGYF) are disordered.

This sequence belongs to the PAPS reductase family. CysD subfamily. Heterodimer composed of CysD, the smaller subunit, and CysN.

It carries out the reaction sulfate + ATP + H(+) = adenosine 5'-phosphosulfate + diphosphate. Its pathway is sulfur metabolism; hydrogen sulfide biosynthesis; sulfite from sulfate: step 1/3. In terms of biological role, with CysN forms the ATP sulfurylase (ATPS) that catalyzes the adenylation of sulfate producing adenosine 5'-phosphosulfate (APS) and diphosphate, the first enzymatic step in sulfur assimilation pathway. APS synthesis involves the formation of a high-energy phosphoric-sulfuric acid anhydride bond driven by GTP hydrolysis by CysN coupled to ATP hydrolysis by CysD. The protein is Sulfate adenylyltransferase subunit 2 of Hahella chejuensis (strain KCTC 2396).